A 260-amino-acid chain; its full sequence is Circadian clock-controlled protein daywake (260 aa).

The signal sequence occupies residues Met1–Ala25.

It belongs to the TO family. Epidermis of newly eclosed adults.

Functionally, component of the circadian clock or downstream effector of clock function. Required for suppressing daytime sleep (siesta) under ambient environmental temperatures. Part of a heat avoidance mechanism that modulates daytime sleep behavior under different environmental temperatures to minimize the risk of heat exposure. Under cooler ambient temperatures, suppresses daytime sleep (siesta) and thus allows for longer periods of daytime activity. In Drosophila melanogaster (Fruit fly), this protein is Circadian clock-controlled protein daywake.